Here is an 89-residue protein sequence, read N- to C-terminus: Small ribosomal subunit protein uS15 (89 aa).

It belongs to the universal ribosomal protein uS15 family. In terms of assembly, part of the 30S ribosomal subunit. Forms a bridge to the 50S subunit in the 70S ribosome, contacting the 23S rRNA.

One of the primary rRNA binding proteins, it binds directly to 16S rRNA where it helps nucleate assembly of the platform of the 30S subunit by binding and bridging several RNA helices of the 16S rRNA. Its function is as follows. Forms an intersubunit bridge (bridge B4) with the 23S rRNA of the 50S subunit in the ribosome. The polypeptide is Small ribosomal subunit protein uS15 (Bdellovibrio bacteriovorus (strain ATCC 15356 / DSM 50701 / NCIMB 9529 / HD100)).